Consider the following 178-residue polypeptide: ATP-dependent protease subunit HslV (178 aa).

Thr7 is an active-site residue. Na(+) is bound by residues Gly162, Cys165, and Thr168.

The protein belongs to the peptidase T1B family. HslV subfamily. As to quaternary structure, a double ring-shaped homohexamer of HslV is capped on each side by a ring-shaped HslU homohexamer. The assembly of the HslU/HslV complex is dependent on binding of ATP.

The protein localises to the cytoplasm. It catalyses the reaction ATP-dependent cleavage of peptide bonds with broad specificity.. With respect to regulation, allosterically activated by HslU binding. Functionally, protease subunit of a proteasome-like degradation complex believed to be a general protein degrading machinery. The sequence is that of ATP-dependent protease subunit HslV from Burkholderia ambifaria (strain MC40-6).